The sequence spans 647 residues: Chaperone protein DnaK (647 aa).

Thr-200 is subject to Phosphothreonine; by autocatalysis. A compositionally biased stretch (low complexity) spans 611–631; sequence AGEQGAAGAAGAGAQQQAQPQ. The tract at residues 611-647 is disordered; the sequence is AGEQGAAGAAGAGAQQQAQPQDDNVVDAEFKEVNDKK. Positions 638 to 647 are enriched in basic and acidic residues; sequence AEFKEVNDKK.

Belongs to the heat shock protein 70 family.

Its function is as follows. Acts as a chaperone. This is Chaperone protein DnaK from Cupriavidus taiwanensis (strain DSM 17343 / BCRC 17206 / CCUG 44338 / CIP 107171 / LMG 19424 / R1) (Ralstonia taiwanensis (strain LMG 19424)).